The chain runs to 307 residues: 1-aminocyclopropane-1-carboxylate oxidase 5 (307 aa).

Residues 106-134 are a coiled coil; it reads SNIKETMGEYREEVRKLASKMMEVMDENL. Residues 152–256 enclose the Fe2OG dioxygenase domain; that stretch reads GEETAFFGTK…RRSIASFYNP (105 aa). Residues His180, Asp182, and His237 each contribute to the Fe cation site. 2-oxoglutarate is bound at residue Arg247.

Belongs to the iron/ascorbate-dependent oxidoreductase family. Fe(2+) serves as cofactor.

It catalyses the reaction 1-aminocyclopropane-1-carboxylate + L-ascorbate + O2 = ethene + L-dehydroascorbate + hydrogen cyanide + CO2 + 2 H2O. It participates in alkene biosynthesis; ethylene biosynthesis via S-adenosyl-L-methionine; ethylene from S-adenosyl-L-methionine: step 2/2. Its function is as follows. Enzyme involved in the ethylene biosynthesis. In Arabidopsis thaliana (Mouse-ear cress), this protein is 1-aminocyclopropane-1-carboxylate oxidase 5.